The chain runs to 252 residues: 5'-nucleotidase SurE (252 aa).

A divalent metal cation-binding residues include Asp-8, Asp-9, Ser-40, and Asn-92.

It belongs to the SurE nucleotidase family. It depends on a divalent metal cation as a cofactor.

The protein resides in the cytoplasm. The catalysed reaction is a ribonucleoside 5'-phosphate + H2O = a ribonucleoside + phosphate. In terms of biological role, nucleotidase that shows phosphatase activity on nucleoside 5'-monophosphates. This chain is 5'-nucleotidase SurE, found in Chelativorans sp. (strain BNC1).